The following is a 352-amino-acid chain: Quinolinate synthase (352 aa).

Iminosuccinate is bound by residues histidine 48 and serine 69. Cysteine 114 contacts [4Fe-4S] cluster. Residues 140-142 (YAN) and serine 157 each bind iminosuccinate. Cysteine 201 is a [4Fe-4S] cluster binding site. Iminosuccinate contacts are provided by residues 227–229 (HPE) and threonine 244. Cysteine 298 serves as a coordination point for [4Fe-4S] cluster.

This sequence belongs to the quinolinate synthase family. Type 1 subfamily. Requires [4Fe-4S] cluster as cofactor.

Its subcellular location is the cytoplasm. The enzyme catalyses iminosuccinate + dihydroxyacetone phosphate = quinolinate + phosphate + 2 H2O + H(+). It functions in the pathway cofactor biosynthesis; NAD(+) biosynthesis; quinolinate from iminoaspartate: step 1/1. Its function is as follows. Catalyzes the condensation of iminoaspartate with dihydroxyacetone phosphate to form quinolinate. In Pseudomonas syringae pv. syringae (strain B728a), this protein is Quinolinate synthase.